The primary structure comprises 465 residues: MIPVRGLEGRKVAVLGLGRSGLATARALEAGGAEPLLWDDSPEARAKAEGQGFTVTDLTRERAFEGVALLVTSPGIPHLYPAPNPVIARAMAAGVPVDNDIGLFFRSFATRDWDAFDQMPRVVCVTGSNGKSTTTALIHHILSEAGRPTQMAGNIGRGVLDLDPARDGEVVVLELSSYQTDLARALTPDVAVFTNLSPDHLDRHGGMGGYFAAKRRLFAEGGPDRAVIGVDEPEGLYLAGQLSVAPEDDRVIRISAGQKLERFGWSVFARKGFLAEWRKGRQMASIDLRAMPGLPGAHNHQNACAAYAACRTLGLAPRQIEAALASFAGLPHRSQTVGEKGGVRFVNDSKATNVDSAAKALQAFPKIRWIAGGLGKDGGIAALQPHLGSVVKAYLIGHSARDFALQIGATDHEICETMERAVARAAEEAQPGEVVLLAPAAASFDQYPNFEKRGEDFMEKVKALL.

127 to 133 (GSNGKST) serves as a coordination point for ATP.

This sequence belongs to the MurCDEF family.

Its subcellular location is the cytoplasm. The catalysed reaction is UDP-N-acetyl-alpha-D-muramoyl-L-alanine + D-glutamate + ATP = UDP-N-acetyl-alpha-D-muramoyl-L-alanyl-D-glutamate + ADP + phosphate + H(+). It functions in the pathway cell wall biogenesis; peptidoglycan biosynthesis. Functionally, cell wall formation. Catalyzes the addition of glutamate to the nucleotide precursor UDP-N-acetylmuramoyl-L-alanine (UMA). The protein is UDP-N-acetylmuramoylalanine--D-glutamate ligase of Cereibacter sphaeroides (strain ATCC 17029 / ATH 2.4.9) (Rhodobacter sphaeroides).